Reading from the N-terminus, the 249-residue chain is Probable hydroxyacylglutathione hydrolase ECU02_0580 (249 aa).

The Zn(2+) site is built by H75, H77, D79, H80, H126, D144, and H183. Substrate-binding positions include 183 to 185 (HDY) and 240 to 243 (RERK).

This sequence belongs to the metallo-beta-lactamase superfamily. Glyoxalase II family. Zn(2+) is required as a cofactor.

The protein localises to the cytoplasm. It is found in the nucleus. The enzyme catalyses an S-(2-hydroxyacyl)glutathione + H2O = a 2-hydroxy carboxylate + glutathione + H(+). The protein operates within secondary metabolite metabolism; methylglyoxal degradation; (R)-lactate from methylglyoxal: step 2/2. Functionally, thiolesterase that catalyzes the hydrolysis of S-D-lactoyl-glutathione to form glutathione and D-lactic acid. This is Probable hydroxyacylglutathione hydrolase ECU02_0580 from Encephalitozoon cuniculi (strain GB-M1) (Microsporidian parasite).